We begin with the raw amino-acid sequence, 424 residues long: Elongation factor 1-alpha (424 aa).

Residues 5–223 form the tr-type G domain; it reads KPHMNLVIIG…NALQVPAKPV (219 aa). The tract at residues 14 to 21 is G1; sequence GHVDHGKS. Residue 14–21 coordinates GTP; the sequence is GHVDHGKS. Ser21 serves as a coordination point for Mg(2+). The interval 70–74 is G2; sequence GVTID. The segment at 91–94 is G3; that stretch reads DAPG. GTP contacts are provided by residues 91–95 and 148–151; these read DAPGH and NKMD. The segment at 148–151 is G4; it reads NKMD. The interval 187 to 189 is G5; that stretch reads SGY.

The protein belongs to the TRAFAC class translation factor GTPase superfamily. Classic translation factor GTPase family. EF-Tu/EF-1A subfamily.

The protein localises to the cytoplasm. The enzyme catalyses GTP + H2O = GDP + phosphate + H(+). In terms of biological role, GTP hydrolase that promotes the GTP-dependent binding of aminoacyl-tRNA to the A-site of ribosomes during protein biosynthesis. The polypeptide is Elongation factor 1-alpha (Picrophilus torridus (strain ATCC 700027 / DSM 9790 / JCM 10055 / NBRC 100828 / KAW 2/3)).